We begin with the raw amino-acid sequence, 437 residues long: Elongation factor 1-gamma (437 aa).

Residue alanine 2 is modified to N-acetylalanine. In terms of domain architecture, GST N-terminal spans 2 to 87 (AAGTLYTYPE…YVSNEELRGS (86 aa)). The 129-residue stretch at 88–216 (TPEAAAQVVQ…VKLCEKMAQF (129 aa)) folds into the GST C-terminal domain. Lysine 147 and lysine 212 each carry N6-acetyllysine. Residues 221 to 254 (FAETQPKKDTPRKEKGSREEKQKPQAERKEEKKA) are compositionally biased toward basic and acidic residues. Positions 221–268 (FAETQPKKDTPRKEKGSREEKQKPQAERKEEKKAAAPAPEEEMDECEQ) are disordered. Residue lysine 253 forms a Glycyl lysine isopeptide (Lys-Gly) (interchain with G-Cter in SUMO1) linkage. The EF-1-gamma C-terminal domain maps to 276-437 (AKDPFAHLPK…KAFNQGKIFK (162 aa)). A Glycyl lysine isopeptide (Lys-Gly) (interchain with G-Cter in SUMO2) cross-link involves residue lysine 285. An N6-acetyllysine modification is found at lysine 401. Lysine 434 carries the N6-acetyllysine; alternate modification. An N6-malonyllysine; alternate modification is found at lysine 434.

In terms of assembly, EF-1 is composed of four subunits: alpha, beta, delta, and gamma.

Probably plays a role in anchoring the complex to other cellular components. This chain is Elongation factor 1-gamma (EEF1G), found in Macaca fascicularis (Crab-eating macaque).